Here is a 178-residue protein sequence, read N- to C-terminus: MYHQLILMALIGVIMANVVPFSMSNIPEEYKEFIPEEVKNFYKNLTQEDRQILRELASKHATFTNEDAALEALKNKSDKLYQKAVELRNFVKAKIDSLKPDAKAFVDEIIAKVRSLRPEDGQKLDMEKLKQAARDIIAKYEALNEETKEELKATFPNTTKIITNEKFKRIANSFLQKN.

Residues 1 to 16 (MYHQLILMALIGVIMA) form the signal peptide. Residues Asn-44 and Asn-75 are each glycosylated (N-linked (GlcNAc...) asparagine). Coiled-coil stretches lie at residues 67–89 (DAALEALKNKSDKLYQKAVELRN) and 122–154 (QKLDMEKLKQAARDIIAKYEALNEETKEELKAT). Asn-157 is a glycosylation site (N-linked (GlcNAc...) asparagine).

This sequence belongs to the fatty-acid and retinol-binding protein (FARBP) family. Post-translationally, N-glycosylated.

The protein localises to the secreted. Its function is as follows. Binds retinol and different fatty acids. This Onchocerca ochengi (Filarial nematode worm) protein is Fatty-acid and retinol-binding protein 1.